A 149-amino-acid chain; its full sequence is Protein E6 (149 aa).

Zinc fingers lie at residues 30–66 (CVYC…CMKC) and 103–139 (CITC…CMSC). Residues 147-149 (TEV) carry the PDZ-binding domain motif.

The protein belongs to the papillomaviridae E6 protein family. Forms homodimers. Interacts with ubiquitin-protein ligase UBE3A/E6-AP and thus forms a complex with human TP53. Interacts with human NFX1 and MAGI3. Interacts with human IRF3; this interaction inhibits the establishment of antiviral state. Interacts with human TYK2; this interaction inhibits JAK-STAT activation by interferon alpha. Interacts with host DLG1; this interaction leads to the proteasomal degradation of DLG1.

Its subcellular location is the host cytoplasm. It is found in the host nucleus. This protein may be involved in the oncogenic potential of this virus (associated with cancer of the uterine cervix). Its function is as follows. Plays a major role in the induction and maintenance of cellular transformation. Acts mainly as an oncoprotein by stimulating the destruction of many host cell key regulatory proteins. E6 associates with host UBE3A/E6-AP ubiquitin-protein ligase, and inactivates tumor suppressors TP53 and TP73 by targeting them to the 26S proteasome for degradation. In turn, DNA damage and chromosomal instabilities increase and lead to cell proliferation and cancer development. The complex E6/E6AP targets several other substrates to degradation via the proteasome including host DLG1 or NFX1, a repressor of human telomerase reverse transcriptase (hTERT). The resulting increased expression of hTERT prevents the shortening of telomere length leading to cell immortalization. Other cellular targets including BAK1, Fas-associated death domain-containing protein (FADD) and procaspase 8, are degraded by E6/E6AP causing inhibition of apoptosis. E6 also inhibits immune response by interacting with host IRF3 and TYK2. These interactions prevent IRF3 transcriptional activities and inhibit TYK2-mediated JAK-STAT activation by interferon alpha resulting in inhibition of the interferon signaling pathway. The polypeptide is Protein E6 (Human papillomavirus 35).